The primary structure comprises 385 residues: S-type anion channel SLAH1 (385 aa).

At 1–42 the chain is on the cytoplasmic side; it reads MEIPRQEIHIEIDNSIPSSKEFKTGLADAKPVVLMSALRSLH. The chain crosses the membrane as a helical span at residues 43–65; that stretch reads AGYFRISLSLCSQALLWKIMIAP. The Extracellular portion of the chain corresponds to 66 to 81; the sequence is ESPSMSHMHSKLPSMA. The helical transmembrane segment at 82 to 102 threads the bilayer; sequence FHLLWYLALVTQVSLCFLYAL. Residues 103–114 are Cytoplasmic-facing; that stretch reads KCIFFFDKVKEE. A helical transmembrane segment spans residues 115-135; the sequence is FLHYIGVNYLYAPSISWLLML. Over 136 to 150 the chain is Extracellular; that stretch reads QSAPMMEPNSVLYQT. A helical transmembrane segment spans residues 151–171; sequence LFWIFAVPVLTLDIKLYGQWF. Over 172–176 the chain is Cytoplasmic; the sequence is TTEKR. A helical membrane pass occupies residues 177–197; the sequence is FLSMLANPASQVSVIANLVAA. Over 198–207 the chain is Extracellular; it reads RGAAEMGWNE. The chain crosses the membrane as a helical span at residues 208–228; sequence CALCMFSLGMVHYLVIFVTLY. Topologically, residues 229–243 are cytoplasmic; it reads QRLPGGNNFPAKLRP. A helical membrane pass occupies residues 244 to 264; that stretch reads IFFLFVAAPAMASLAWNSICG. Residue threonine 265 is a topological domain, extracellular. A helical membrane pass occupies residues 266–286; sequence FDAVAKMLFFLSLFIFMSLVC. The Cytoplasmic segment spans residues 287 to 299; sequence RPNLFKKSMKRFN. Residues 300 to 320 traverse the membrane as a helical segment; that stretch reads VAWWAYSFPLTFLALDSVQYA. Residues 321–330 lie on the Extracellular side of the membrane; that stretch reads QEVKDPVGSG. The helical transmembrane segment at 331-351 threads the bilayer; the sequence is LMLIFSSISVLIFLGMMVLTA. The Cytoplasmic portion of the chain corresponds to 352-385; that stretch reads ANSNRLLRHDPVLGSATDPKDKQKTLSLNATNQN. Residues 366-385 are disordered; sequence SATDPKDKQKTLSLNATNQN. Residues 376-385 show a composition bias toward polar residues; sequence TLSLNATNQN.

The protein belongs to the SLAC1 S-type anion channel family. In terms of assembly, homotrimer. In terms of tissue distribution, expressed in the vascular systems of root.

The protein localises to the cell membrane. Its function is as follows. Slow, weak voltage-dependent S-type anion efflux channel involved in maintenance of anion homeostasis. The protein is S-type anion channel SLAH1 (SLAH1) of Arabidopsis thaliana (Mouse-ear cress).